The chain runs to 1386 residues: X-linked retinitis pigmentosa GTPase regulator homolog (1386 aa).

Disordered regions lie at residues 1–25, 37–56, and 730–760; these read MFFK…TSSE, AGAR…KARR, and MPQM…PEQH. Residues 9–25 show a composition bias toward low complexity; it reads SRKTSANSSSDTSTSSE. Over residues 45–56 the composition is skewed to basic residues; sequence SVHRQSGKKARR. RCC1 repeat units lie at residues 737–787, 788–838, 839–891, and 893–943; these read SKRS…VLSS, SGQL…FICS, DGSL…VLTD, and GRVL…CITE. The tract at residues 972–994 is disordered; that stretch reads LKNTEDPSSPSPSTNGSTPRVNL. RCC1 repeat units follow at residues 1034–1085 and 1087–1139; these read EGTL…ASTD and GSVF…FVQK.

Could be a guanine-nucleotide releasing factor for glo-1. May play a role in gut granule biogenesis. Regulates axon termination in PLM and ALM neurons. In Caenorhabditis elegans, this protein is X-linked retinitis pigmentosa GTPase regulator homolog (glo-4).